We begin with the raw amino-acid sequence, 304 residues long: dTDP-4-dehydrorhamnose reductase (304 aa).

NADH is bound by residues 16-18 (GML), 42-43 (DI), and 66-68 (AWT). NADPH is bound by residues 17–18 (ML), 42–43 (DI), and 66–68 (AWT). Residue 107-108 (TD) coordinates dTDP-beta-L-rhamnose. Residues Tyr131 and Lys135 each contribute to the NADH site. NADPH-binding residues include Tyr131 and Lys135. The active-site Proton donor/acceptor is the Tyr131. Trp157 lines the dTDP-beta-L-rhamnose pocket.

The protein belongs to the dTDP-4-dehydrorhamnose reductase family. In terms of assembly, homodimer. Requires Mg(2+) as cofactor.

It catalyses the reaction dTDP-beta-L-rhamnose + NADP(+) = dTDP-4-dehydro-beta-L-rhamnose + NADPH + H(+). The protein operates within carbohydrate biosynthesis; dTDP-L-rhamnose biosynthesis. Its pathway is antibiotic biosynthesis; streptomycin biosynthesis. Functionally, involved in the biosynthesis of the streptose moiety of streptomycin. Catalyzes the reduction of dTDP-6-deoxy-L-lyxo-4-hexulose to yield dTDP-L-rhamnose. RmlD uses NADH and NADPH nearly equally well. This is dTDP-4-dehydrorhamnose reductase from Streptomyces griseus.